The following is a 365-amino-acid chain: Probable 7-methylxanthine methyltransferase PCS2 (365 aa).

Tyr19 lines the S-adenosyl-L-homocysteine pocket. Position 26 (Thr26) interacts with theobromine. 5 residues coordinate S-adenosyl-L-homocysteine: Cys62, Asp99, Leu100, Ser134, and Phe135. Residues Tyr152, His155, and Trp156 each contribute to the theobromine site. Asn173 lines the Mg(2+) pocket. Residue Arg221 coordinates theobromine. Asp259, Phe261, and Asn262 together coordinate Mg(2+).

The protein belongs to the methyltransferase superfamily. Type-7 methyltransferase family. Mg(2+) is required as a cofactor.

It carries out the reaction 7-methylxanthine + S-adenosyl-L-methionine = theobromine + S-adenosyl-L-homocysteine + H(+). Functionally, no detectable N-methyltransferase activity. This chain is Probable 7-methylxanthine methyltransferase PCS2, found in Camellia ptilophylla (Cocoa tea).